Reading from the N-terminus, the 164-residue chain is uncharacterized protein (164 aa).

Positions 28 to 157 (EAEILYQLQG…LIDVLARMRN (130 aa)) constitute an HTH marR-type domain. Residues 71-94 (QSDLQKKVNIDSAAVTRHLKQLES) constitute a DNA-binding region (H-T-H motif).

This is an uncharacterized protein from Bacillus subtilis (strain 168).